The chain runs to 658 residues: UvrABC system protein B (658 aa).

The Helicase ATP-binding domain occupies Lys-25–Ile-414. Residue Gly-38–Thr-45 participates in ATP binding. A Beta-hairpin motif is present at residues His-91–Ile-114. Residues Gln-433–Arg-607 enclose the Helicase C-terminal domain. The region spanning Glu-623–Leu-658 is the UVR domain.

Belongs to the UvrB family. In terms of assembly, forms a heterotetramer with UvrA during the search for lesions. Interacts with UvrC in an incision complex.

Its subcellular location is the cytoplasm. The UvrABC repair system catalyzes the recognition and processing of DNA lesions. A damage recognition complex composed of 2 UvrA and 2 UvrB subunits scans DNA for abnormalities. Upon binding of the UvrA(2)B(2) complex to a putative damaged site, the DNA wraps around one UvrB monomer. DNA wrap is dependent on ATP binding by UvrB and probably causes local melting of the DNA helix, facilitating insertion of UvrB beta-hairpin between the DNA strands. Then UvrB probes one DNA strand for the presence of a lesion. If a lesion is found the UvrA subunits dissociate and the UvrB-DNA preincision complex is formed. This complex is subsequently bound by UvrC and the second UvrB is released. If no lesion is found, the DNA wraps around the other UvrB subunit that will check the other stand for damage. In Helicobacter pylori (strain ATCC 700392 / 26695) (Campylobacter pylori), this protein is UvrABC system protein B.